Here is a 192-residue protein sequence, read N- to C-terminus: Protein FAM210B, mitochondrial (192 aa).

The transit peptide at 1-58 (MAGLLALLGPAGRVGARVRPRATWLLGATAPCAPPPLALALLPPRLDARLLRTARGDC) directs the protein to the mitochondrion. A disordered region spans residues 57–80 (DCRGHQDPSQATGTTGSSVSCTEE). Residues 63-77 (DPSQATGTTGSSVSC) are compositionally biased toward polar residues. Positions 80–191 (EKKQSKSQQL…VGFFKPPAAK (112 aa)) constitute a DUF1279 domain. The next 2 helical transmembrane spans lie at 99–119 (VGVS…YMVV) and 150–170 (FVVA…ITLV).

This sequence belongs to the FAM210 family. As to expression, expressed in late erythroblast differentiation stages. Underexpressed in ovarian cancer epithelia cells compared with normal human ovarian surface epithelia.

Its subcellular location is the mitochondrion. It localises to the mitochondrion outer membrane. In terms of biological role, plays a role in erythroid differentiation. Involved in cell proliferation and tumor cell growth suppression. Involved in the metabolic reprogramming of cancer cells in a PDK4-dependent manner. This is Protein FAM210B, mitochondrial from Homo sapiens (Human).